We begin with the raw amino-acid sequence, 36 residues long: Pancreatic polypeptide (36 aa).

The residue at position 36 (Tyr-36) is a Tyrosine amide.

Belongs to the NPY family.

The protein localises to the secreted. Its function is as follows. Hormone secreted by pancreatic cells that acts as a regulator of pancreatic and gastrointestinal functions. The sequence is that of Pancreatic polypeptide (PPY) from Larus argentatus (Herring gull).